Here is a 149-residue protein sequence, read N- to C-terminus: D-aminoacyl-tRNA deacylase (149 aa).

A Gly-cisPro motif, important for rejection of L-amino acids motif is present at residues glycine 139–proline 140.

Belongs to the DTD family. As to quaternary structure, homodimer.

The protein localises to the cytoplasm. The enzyme catalyses glycyl-tRNA(Ala) + H2O = tRNA(Ala) + glycine + H(+). It catalyses the reaction a D-aminoacyl-tRNA + H2O = a tRNA + a D-alpha-amino acid + H(+). Functionally, an aminoacyl-tRNA editing enzyme that deacylates mischarged D-aminoacyl-tRNAs. Also deacylates mischarged glycyl-tRNA(Ala), protecting cells against glycine mischarging by AlaRS. Acts via tRNA-based rather than protein-based catalysis; rejects L-amino acids rather than detecting D-amino acids in the active site. By recycling D-aminoacyl-tRNA to D-amino acids and free tRNA molecules, this enzyme counteracts the toxicity associated with the formation of D-aminoacyl-tRNA entities in vivo and helps enforce protein L-homochirality. The sequence is that of D-aminoacyl-tRNA deacylase (dtd1) from Schizosaccharomyces pombe (strain 972 / ATCC 24843) (Fission yeast).